The sequence spans 362 residues: Adenosine deaminase (362 aa).

Residues His19 and His21 each contribute to the Zn(2+) site. Substrate contacts are provided by His21, Asp23, and Gly181. Residue His208 participates in Zn(2+) binding. Glu211 (proton donor) is an active-site residue. Residue Asp300 coordinates Zn(2+).

This sequence belongs to the metallo-dependent hydrolases superfamily. Adenosine and AMP deaminases family. Adenosine deaminase subfamily. The cofactor is Zn(2+).

It catalyses the reaction adenosine + H2O + H(+) = inosine + NH4(+). The enzyme catalyses 2'-deoxyadenosine + H2O + H(+) = 2'-deoxyinosine + NH4(+). Functionally, catalyzes the hydrolytic deamination of adenosine and 2-deoxyadenosine. The chain is Adenosine deaminase from Mycolicibacterium vanbaalenii (strain DSM 7251 / JCM 13017 / BCRC 16820 / KCTC 9966 / NRRL B-24157 / PYR-1) (Mycobacterium vanbaalenii).